The following is a 359-amino-acid chain: Peptide chain release factor 1 (359 aa).

Position 236 is an N5-methylglutamine (glutamine 236).

The protein belongs to the prokaryotic/mitochondrial release factor family. Post-translationally, methylated by PrmC. Methylation increases the termination efficiency of RF1.

It localises to the cytoplasm. Peptide chain release factor 1 directs the termination of translation in response to the peptide chain termination codons UAG and UAA. The protein is Peptide chain release factor 1 of Streptococcus agalactiae.